The primary structure comprises 253 residues: Cyclin-C1-1 (253 aa).

This sequence belongs to the cyclin family. Cyclin C subfamily.

The chain is Cyclin-C1-1 (CYCC1-1) from Arabidopsis thaliana (Mouse-ear cress).